The chain runs to 285 residues: Small ribosomal subunit protein uS3 (285 aa).

The KH type-2 domain occupies 39–107 (VREFLKKKLK…PVAVNIEEVR (69 aa)). Residues 211 to 285 (GDAPVMRGED…RAAPPAAKGE (75 aa)) form a disordered region. A compositionally biased stretch (basic and acidic residues) spans 217-241 (RGEDRPEDDRRRRNPRGDRPGDRRG). The segment covering 242–255 (PGAGRGGPGAGRGP) has biased composition (gly residues). Composition is skewed to low complexity over residues 256-267 (ADGASAAPSGDA) and 276-285 (RAAPPAAKGE).

The protein belongs to the universal ribosomal protein uS3 family. As to quaternary structure, part of the 30S ribosomal subunit. Forms a tight complex with proteins S10 and S14.

In terms of biological role, binds the lower part of the 30S subunit head. Binds mRNA in the 70S ribosome, positioning it for translation. The polypeptide is Small ribosomal subunit protein uS3 (Leptothrix cholodnii (strain ATCC 51168 / LMG 8142 / SP-6) (Leptothrix discophora (strain SP-6))).